Reading from the N-terminus, the 90-residue chain is Inner kinetochore subunit MHF1 (90 aa).

It belongs to the TAF9 family. CENP-S/MHF1 subfamily. The MHF histone-fold complex is a heterotetramer of 2 MHF1-MHF2 heterodimers. Together with MPH1/FANCM, forms the FANCM-MHF complex. Component of the inner kinetochore constitutive centromere-associated network (CCAN) (also known as central kinetochore CTF19 complex in yeast), which is composed of at least AME1, CHL4, CNN1, CTF3, CTF19, IML3, MCM16, MCM21, MCM22, MHF1, MHF2, MIF2, NKP1, NKP2, OKP1 and WIP1.

Functionally, dsDNA-binding component of a FANCM-MHF complex involved in DNA damage repair and genome maintenance. FANCM-MHF promotes gene conversion at blocked replication forks, probably by reversal of the stalled fork. Component of the kinetochore, a multiprotein complex that assembles on centromeric DNA and attaches chromosomes to spindle microtubules, mediating chromosome segregation and sister chromatid segregation during meiosis and mitosis. Component of the inner kinetochore constitutive centromere-associated network (CCAN), which serves as a structural platform for outer kinetochore assembly. The polypeptide is Inner kinetochore subunit MHF1 (Saccharomyces cerevisiae (strain ATCC 204508 / S288c) (Baker's yeast)).